We begin with the raw amino-acid sequence, 482 residues long: GTPase Der (482 aa).

2 EngA-type G domains span residues proline 3–phenylalanine 166 and isoleucine 195–threonine 368. GTP is bound by residues glycine 9 to serine 16, aspartate 56 to isoleucine 60, asparagine 118 to aspartate 121, glycine 201 to serine 208, aspartate 248 to valine 252, and asparagine 313 to aspartate 316. Residues lysine 369–alanine 453 enclose the KH-like domain.

This sequence belongs to the TRAFAC class TrmE-Era-EngA-EngB-Septin-like GTPase superfamily. EngA (Der) GTPase family. Associates with the 50S ribosomal subunit.

In terms of biological role, GTPase that plays an essential role in the late steps of ribosome biogenesis. In Pseudoalteromonas atlantica (strain T6c / ATCC BAA-1087), this protein is GTPase Der.